A 383-amino-acid polypeptide reads, in one-letter code: Protein RecA (383 aa).

79 to 86 (GPESSGKT) serves as a coordination point for ATP.

This sequence belongs to the RecA family.

It is found in the cytoplasm. In terms of biological role, can catalyze the hydrolysis of ATP in the presence of single-stranded DNA, the ATP-dependent uptake of single-stranded DNA by duplex DNA, and the ATP-dependent hybridization of homologous single-stranded DNAs. It interacts with LexA causing its activation and leading to its autocatalytic cleavage. This chain is Protein RecA, found in Streptococcus gordonii (strain Challis / ATCC 35105 / BCRC 15272 / CH1 / DL1 / V288).